Reading from the N-terminus, the 225-residue chain is Adenylate kinase (225 aa).

Position 10 to 15 (10 to 15) interacts with ATP; the sequence is GSGKGT. The tract at residues 30 to 59 is NMP; sequence ESGAIFRENISKGTEIGKKAKEYIDRGDLV. AMP-binding positions include S31, R36, 57–59, 85–88, and Q92; these read DLV and GFPR. The interval 126 to 165 is LID; it reads GRRLCENDNNHPNNIFIDAIKPDGDKCRVCGGALSARSDD. Position 127 (R127) interacts with ATP. 2 residues coordinate AMP: R162 and R174. Position 211 (P211) interacts with ATP.

The protein belongs to the adenylate kinase family. Monomer.

It is found in the cytoplasm. It catalyses the reaction AMP + ATP = 2 ADP. The protein operates within purine metabolism; AMP biosynthesis via salvage pathway; AMP from ADP: step 1/1. Functionally, catalyzes the reversible transfer of the terminal phosphate group between ATP and AMP. Plays an important role in cellular energy homeostasis and in adenine nucleotide metabolism. The protein is Adenylate kinase of Desulfatibacillum aliphaticivorans.